The chain runs to 106 residues: UPF0145 protein BH0643 (106 aa).

The protein belongs to the UPF0145 family.

This is UPF0145 protein BH0643 from Halalkalibacterium halodurans (strain ATCC BAA-125 / DSM 18197 / FERM 7344 / JCM 9153 / C-125) (Bacillus halodurans).